The following is a 256-amino-acid chain: Small ribosomal subunit protein uS2 (256 aa).

Belongs to the universal ribosomal protein uS2 family.

The polypeptide is Small ribosomal subunit protein uS2 (Methylococcus capsulatus (strain ATCC 33009 / NCIMB 11132 / Bath)).